The chain runs to 299 residues: ATP phosphoribosyltransferase (299 aa).

It belongs to the ATP phosphoribosyltransferase family. Long subfamily. It depends on Mg(2+) as a cofactor.

The protein localises to the cytoplasm. The enzyme catalyses 1-(5-phospho-beta-D-ribosyl)-ATP + diphosphate = 5-phospho-alpha-D-ribose 1-diphosphate + ATP. It participates in amino-acid biosynthesis; L-histidine biosynthesis; L-histidine from 5-phospho-alpha-D-ribose 1-diphosphate: step 1/9. Feedback inhibited by histidine. Its function is as follows. Catalyzes the condensation of ATP and 5-phosphoribose 1-diphosphate to form N'-(5'-phosphoribosyl)-ATP (PR-ATP). Has a crucial role in the pathway because the rate of histidine biosynthesis seems to be controlled primarily by regulation of HisG enzymatic activity. The protein is ATP phosphoribosyltransferase of Shewanella baltica (strain OS155 / ATCC BAA-1091).